Reading from the N-terminus, the 497-residue chain is Tripartite motif-containing protein 5 (497 aa).

Alanine 2 bears the N-acetylalanine mark. Residues 15–60 (CPICLELLTEPLSLHCGHSFCQACITANHKKSMLYKEGERSCPVCR) form an RING-type zinc finger. Serine 87 carries the phosphoserine modification. The B box-type zinc finger occupies 92–133 (QKVDHCARHGEKLLLFCQEDSKVICWLCERSQEHRGHHTFLM). 4 residues coordinate Zn(2+): cysteine 97, histidine 100, cysteine 119, and histidine 125. Positions 137–225 (AQEYHVKLQT…LTKSETEMVQ (89 aa)) form a coiled coil. The segment at 187-200 (FEQLREILDWEESN) is required for interaction with GABARAP and for autophagy. Residues 283–497 (LKGMLDMFRE…VPMTLCSPSS (215 aa)) enclose the B30.2/SPRY domain.

It belongs to the TRIM/RBCC family. In terms of assembly, can form homodimers and homotrimers. In addition to lower-order dimerization, also exhibits a higher-order multimerization and both low- and high-order multimerizations are essential for its restriction activity. Interacts with MAP3K7/TAK1, TAB2 and TAB3. Interacts with HSPA8/HSC70, PSMC2, PSMC4, PSMC5 and PSMD7. Interacts with SQSTM1. Interacts (via B30.2/SPRY domain) with HSPA1A/B. Interacts with TRIM6 and TRIM34. Interacts with BECN1; GABARAP. Interacts with ULK1 (phosphorylated form), GABARAPL1, GABARAPL2, MAP1LC3A and MAP1LC3C. In terms of processing, degraded in a proteasome-independent fashion in the absence of viral infection but in a proteasome-dependent fashion following exposure to restriction sensitive virus. Post-translationally, autoubiquitinated in a RING finger- and UBE2D2-dependent manner. Monoubiquitinated by TRIM21. Deubiquitinated by Yersinia YopJ. Ubiquitination may not lead to proteasomal degradation.

The protein localises to the cytoplasm. It localises to the nucleus. The enzyme catalyses S-ubiquitinyl-[E2 ubiquitin-conjugating enzyme]-L-cysteine + [acceptor protein]-L-lysine = [E2 ubiquitin-conjugating enzyme]-L-cysteine + N(6)-ubiquitinyl-[acceptor protein]-L-lysine.. It functions in the pathway protein modification; protein ubiquitination. In terms of biological role, capsid-specific restriction factor that prevents infection from non-host-adapted retroviruses. Blocks viral replication early in the life cycle, after viral entry but before reverse transcription. In addition to acting as a capsid-specific restriction factor, also acts as a pattern recognition receptor that activates innate immune signaling in response to the retroviral capsid lattice. Binding to the viral capsid triggers its E3 ubiquitin ligase activity, and in concert with the heterodimeric ubiquitin conjugating enzyme complex UBE2V1-UBE2N (also known as UBC13-UEV1A complex) generates 'Lys-63'-linked polyubiquitin chains, which in turn are catalysts in the autophosphorylation of the MAP3K7/TAK1 complex (includes TAK1, TAB2, and TAB3). Activation of the MAP3K7/TAK1 complex by autophosphorylation results in the induction and expression of NF-kappa-B and MAPK-responsive inflammatory genes, thereby leading to an innate immune response in the infected cell. Restricts infection by human immunodeficiency virus type 1 (HIV-1) and simian immunodeficiency virus (SIV-agm). Plays a role in regulating autophagy through activation of autophagy regulator BECN1 by causing its dissociation from its inhibitors BCL2 and TAB2. Also plays a role in autophagy by acting as a selective autophagy receptor which recognizes and targets HIV-1 capsid protein p24 for autophagic destruction. This is Tripartite motif-containing protein 5 (TRIM5) from Macaca mulatta (Rhesus macaque).